Here is a 464-residue protein sequence, read N- to C-terminus: Serine/threonine-protein kinase 38-like (464 aa).

Ala2 is modified (N-acetylalanine). The tract at residues 63-88 (KKLRRSQHARKETEFLRLKRTRLGLD) is S100B binding. Thr75 carries the phosphothreonine modification. The region spanning 90–383 (FESLKVIGRG…VEEIKGHPFF (294 aa)) is the Protein kinase domain. ATP-binding positions include 96–104 (IGRGAFGEV) and Lys119. The active-site Proton acceptor is Asp213. Ser282 is modified (phosphoserine; by autocatalysis). Residues 384–453 (EGVDWEHIRE…KRFEGLTQRG (70 aa)) enclose the AGC-kinase C-terminal domain. Residue Thr442 is modified to Phosphothreonine; by STK24/MST3.

Belongs to the protein kinase superfamily. AGC Ser/Thr protein kinase family. Homodimeric S100B binds two molecules of STK38L. Interacts with MICAL1; leading to inhibit the protein kinase activity by antagonizing activation by MST1/STK4. Interacts with MOB1 and MOB2. Requires Mg(2+) as cofactor. As to expression, ubiquitously expressed with highest levels observed in the thymus.

Its subcellular location is the cytoplasm. It is found in the cytoskeleton. It localises to the membrane. The catalysed reaction is L-seryl-[protein] + ATP = O-phospho-L-seryl-[protein] + ADP + H(+). The enzyme catalyses L-threonyl-[protein] + ATP = O-phospho-L-threonyl-[protein] + ADP + H(+). Its activity is regulated as follows. Activated by binding of S100B which releases autoinhibitory N-lobe interactions, enabling ATP to bind and the autophosphorylation of Ser-282. Thr-442 then undergoes calcium-dependent phosphorylation by STK24/MST3. Interactions between phosphorylated Thr-442 and the N-lobe promote additional structural changes that complete the activation of the kinase. Autoinhibition is also released by the binding of MOB1/MOBKL1A and MOB2/HCCA2 to the N-terminal of STK38L. Involved in the regulation of structural processes in differentiating and mature neuronal cells. This Homo sapiens (Human) protein is Serine/threonine-protein kinase 38-like.